The chain runs to 432 residues: DEAD-box ATP-dependent RNA helicase 56 (432 aa).

Residues 1–28 adopt a coiled-coil conformation; it reads MAEAEVKDNEVYEEDLVDYEEEVENGTD. Positions 51–79 match the Q motif motif; sequence SGFRDFLLKPELLRAIQDCGFEHPSEVQH. The 174-residue stretch at 82–255 folds into the Helicase ATP-binding domain; sequence IPQAILGMDV…KKFMQDPMEI (174 aa). Position 95–102 (95–102) interacts with ATP; the sequence is AKSGMGKT. Residues 202-205 carry the DEAD box motif; it reads DECD. The 146-residue stretch at 283–428 folds into the Helicase C-terminal domain; the sequence is KLNDLLDALD…ELPEQIDTST (146 aa).

It belongs to the DEAD box helicase family. DECD subfamily. As to quaternary structure, homodimer and heterodimer with AIP2. Interacts with API5.

The protein resides in the nucleus. It carries out the reaction ATP + H2O = ADP + phosphate + H(+). ATP-binding RNA helicase involved in pre-mRNA splicing. Required for the export of mRNA out of the nucleus. Required for tapetal programmed cell death (PCD) and degeneration during anther development. Forms dimer with AIP2 and binds the promoter region of the cysteine protease CP1. Can complement the yeast RNA helicase SUB2. Plants silencing AIP1 and AIP2 are male sterile. The polypeptide is DEAD-box ATP-dependent RNA helicase 56 (Oryza sativa subsp. japonica (Rice)).